The chain runs to 1374 residues: DNA-directed RNA polymerase subunit beta (1374 aa).

Belongs to the RNA polymerase beta chain family. In terms of assembly, the RNAP catalytic core consists of 2 alpha, 1 beta, 1 beta' and 1 omega subunit. When a sigma factor is associated with the core the holoenzyme is formed, which can initiate transcription.

The enzyme catalyses RNA(n) + a ribonucleoside 5'-triphosphate = RNA(n+1) + diphosphate. Functionally, DNA-dependent RNA polymerase catalyzes the transcription of DNA into RNA using the four ribonucleoside triphosphates as substrates. The sequence is that of DNA-directed RNA polymerase subunit beta from Rhodopseudomonas palustris (strain BisB5).